The chain runs to 398 residues: Flavin-containing monooxygenase ustF1 (398 aa).

An N-terminal signal peptide occupies residues 1-22 (MTVSQVRRVAVIGAGISGVVST). 13-18 (GAGISG) provides a ligand contact to FAD. 4 N-linked (GlcNAc...) asparagine glycosylation sites follow: asparagine 53, asparagine 57, asparagine 119, and asparagine 126. An NADP(+)-binding site is contributed by 194 to 199 (GGGVSS). Asparagine 236, asparagine 243, and asparagine 271 each carry an N-linked (GlcNAc...) asparagine glycan.

Belongs to the FMO family.

It participates in mycotoxin biosynthesis. Functionally, flavin-containing monooxygenase; part of the gene cluster that mediates the biosynthesis of the secondary metabolite ustiloxin B, an antimitotic tetrapeptide. First, ustA is processed by the subtilisin-like endoprotease Kex2 that is outside the ustiloxin B gene cluster, at the C-terminal side of Arg-Lys, after transfer to Golgi apparatus through the endoplasmic reticulum (ER). Cleavage by KEX2 generates 16 peptides YAIG-I to YAIG-XVI. To process the precursor peptide further, at least two peptidases are necessary to cleave the N-terminal and C-terminal sides of the Tyr-Ala-Ile-Gly core peptide which serves as backbone for the synthesis of ustiloxin B, through cyclization and modification of the tyrosine with a non-protein coding amino acid, norvaline. One of the two peptidases must be the serine peptidase ustP; and the other pepdidase is probably ustH. Macrocyclization of the core peptide derived from ustA requires the tyrosinase ustQ, as well as the homologous oxidases ustYa and ustYb, and leads to the production of the first cyclization product N-desmethylustiloxin F. For the formation of N-desmethylustiloxin F, three oxidation steps are required, hydroxylation at the benzylic position, hydroxylation at either the aromatic ring of Tyr or beta-position of Ile, and oxidative cyclization. UstQ may catalyze the oxidation of a phenol moiety, whereas the ustYa and ustYb are most likely responsible for the remaining two-step oxidations. N-desmethylustiloxin F is then methylated by ustM to yield ustiloxin F which in turn substrate of the cytochrome P450 monooxygenase ustC which catalyzes the formation of S-deoxyustiloxin H. The flavoprotein monooxygenases ustF1 and ustF2 then participate in the modification of the side chain of S-deoxyustiloxin H, leading to the synthesis of an oxime intermediate, via ustiloxin H. Finally, carboxylative dehydration performed by the cysteine desulfurase-like protein ustD yields ustiloxin B. This chain is Flavin-containing monooxygenase ustF1, found in Aspergillus flavus (strain ATCC 200026 / FGSC A1120 / IAM 13836 / NRRL 3357 / JCM 12722 / SRRC 167).